Consider the following 337-residue polypeptide: Ribosomal RNA small subunit methyltransferase H (337 aa).

S-adenosyl-L-methionine is bound by residues 33–35, Asp53, Asp101, and Gln108; that span reads AGH.

The protein belongs to the methyltransferase superfamily. RsmH family.

Its subcellular location is the cytoplasm. The catalysed reaction is cytidine(1402) in 16S rRNA + S-adenosyl-L-methionine = N(4)-methylcytidine(1402) in 16S rRNA + S-adenosyl-L-homocysteine + H(+). Its function is as follows. Specifically methylates the N4 position of cytidine in position 1402 (C1402) of 16S rRNA. The polypeptide is Ribosomal RNA small subunit methyltransferase H (Herpetosiphon aurantiacus (strain ATCC 23779 / DSM 785 / 114-95)).